The chain runs to 224 residues: N-(5'-phosphoribosyl)anthranilate isomerase (224 aa).

Belongs to the TrpF family.

It catalyses the reaction N-(5-phospho-beta-D-ribosyl)anthranilate = 1-(2-carboxyphenylamino)-1-deoxy-D-ribulose 5-phosphate. The protein operates within amino-acid biosynthesis; L-tryptophan biosynthesis; L-tryptophan from chorismate: step 3/5. The polypeptide is N-(5'-phosphoribosyl)anthranilate isomerase (Sinorhizobium fredii (strain NBRC 101917 / NGR234)).